Consider the following 189-residue polypeptide: MTDKTEKVAVDPETVFKRPRECDSPSYQKRQRMALLARKQGAGDSLIAGSAMSKEKKLMTGHAIPPSQLDSQIDDFTGFSKDRMMQKPGSNAPVGGNVTSSFSGDDLECRETAFSPKSQQEINADIKRQLVKELRCVGQKYEKIFEMLEGVQGPTAVRKRFFESIIKEAARCMRRDFVKHLKKKLKRMI.

This sequence belongs to the CT45 family. In terms of tissue distribution, testis specific. Expressed in cancer cell lines.

This is Cancer/testis antigen family 45 member A2 from Homo sapiens (Human).